The chain runs to 324 residues: D-alanine--D-alanine ligase (324 aa).

In terms of domain architecture, ATP-grasp spans Asn121–Glu321. Val149–Thr204 contacts ATP. Mg(2+) is bound by residues Asp275, Glu288, and Asn290.

It belongs to the D-alanine--D-alanine ligase family. It depends on Mg(2+) as a cofactor. Mn(2+) serves as cofactor.

The protein resides in the cytoplasm. The catalysed reaction is 2 D-alanine + ATP = D-alanyl-D-alanine + ADP + phosphate + H(+). The protein operates within cell wall biogenesis; peptidoglycan biosynthesis. Its function is as follows. Cell wall formation. The polypeptide is D-alanine--D-alanine ligase (Bacteroides fragilis (strain ATCC 25285 / DSM 2151 / CCUG 4856 / JCM 11019 / LMG 10263 / NCTC 9343 / Onslow / VPI 2553 / EN-2)).